Consider the following 128-residue polypeptide: Holo-[acyl-carrier-protein] synthase (128 aa).

Positions 8 and 60 each coordinate Mg(2+).

The protein belongs to the P-Pant transferase superfamily. AcpS family. It depends on Mg(2+) as a cofactor.

The protein resides in the cytoplasm. It catalyses the reaction apo-[ACP] + CoA = holo-[ACP] + adenosine 3',5'-bisphosphate + H(+). Transfers the 4'-phosphopantetheine moiety from coenzyme A to a Ser of acyl-carrier-protein. This is Holo-[acyl-carrier-protein] synthase from Anaeromyxobacter sp. (strain K).